A 548-amino-acid chain; its full sequence is ADP,ATP carrier protein 1 (548 aa).

Helical transmembrane passes span 39 to 59 and 75 to 95; these read RPVF…YSVS and SIPY…VFSI. N-linked (GlcNAc...) asparagine glycosylation is present at asparagine 101. The next 8 membrane-spanning stretches (helical) occupy residues 107–127, 149–169, 171–191, 204–224, 239–259, 302–322, 350–370, and 374–394; these read VFSI…TVLM, MVFM…SWTS, LMYL…FFAL, FIPL…FSMK, LFFR…IYLI, LVLA…MVEA, IQLA…PALI, and GFLY…ASVF. 2 N-linked (GlcNAc...) asparagine glycosylation sites follow: asparagine 400 and asparagine 406. Residues 410 to 430 form a helical membrane-spanning segment; that stretch reads LGFVSIGENLWLEQLLGAIIV. Asparagine 488 carries N-linked (GlcNAc...) asparagine glycosylation. Residues 494 to 514 traverse the membrane as a helical segment; the sequence is KAAISSLTIVTVITACWGFAV.

The protein belongs to the ADP/ATP translocase tlc family.

It localises to the cell membrane. ATP transporter involved in the uptake of ATP from the host cell cytoplasm. Provides the microsporidian cell with host ATP in exchange for ADP. This is an obligate exchange system. This energy acquiring activity is an important component of microsporidian parasitism. The polypeptide is ADP,ATP carrier protein 1 (ANC1) (Paranosema grylli (Microsporidian parasite)).